The sequence spans 272 residues: Phosphatidylglycerol--prolipoprotein diacylglyceryl transferase (272 aa).

Transmembrane regions (helical) follow at residues 17–37 (LQVH…WGLA), 55–75 (LVFY…VLFY), 90–110 (VWTG…AMLF), 125–145 (FIAP…FIGG), 174–194 (PSQI…LWWF), 202–222 (MAVS…MEFF), and 230–250 (GFIL…MLLI). Residue R138 participates in a 1,2-diacyl-sn-glycero-3-phospho-(1'-sn-glycerol) binding.

It belongs to the Lgt family.

The protein localises to the cell inner membrane. It catalyses the reaction L-cysteinyl-[prolipoprotein] + a 1,2-diacyl-sn-glycero-3-phospho-(1'-sn-glycerol) = an S-1,2-diacyl-sn-glyceryl-L-cysteinyl-[prolipoprotein] + sn-glycerol 1-phosphate + H(+). It functions in the pathway protein modification; lipoprotein biosynthesis (diacylglyceryl transfer). Functionally, catalyzes the transfer of the diacylglyceryl group from phosphatidylglycerol to the sulfhydryl group of the N-terminal cysteine of a prolipoprotein, the first step in the formation of mature lipoproteins. The protein is Phosphatidylglycerol--prolipoprotein diacylglyceryl transferase of Acinetobacter baumannii (strain ACICU).